The primary structure comprises 149 residues: MSQKHRILLLNGPNLNLLGKREPGIYGSKTLDEIVADLTHNADELGVTLEHLQSNAEHELVGRIHQAMGQVDFIIINPAAFTHTSVAIRDALLGVAIPFIEVHLSNVHAREPFRHHSYLSDVAKGVICGLGADGYQFALTAAVHQLRAA.

Y26 serves as the catalytic Proton acceptor. The substrate site is built by N77, H83, and D90. Residue H103 is the Proton donor of the active site. Residues 104–105 (LS) and R114 contribute to the substrate site.

It belongs to the type-II 3-dehydroquinase family. In terms of assembly, homododecamer.

It catalyses the reaction 3-dehydroquinate = 3-dehydroshikimate + H2O. The protein operates within metabolic intermediate biosynthesis; chorismate biosynthesis; chorismate from D-erythrose 4-phosphate and phosphoenolpyruvate: step 3/7. Catalyzes a trans-dehydration via an enolate intermediate. This chain is 3-dehydroquinate dehydratase, found in Aeromonas hydrophila subsp. hydrophila (strain ATCC 7966 / DSM 30187 / BCRC 13018 / CCUG 14551 / JCM 1027 / KCTC 2358 / NCIMB 9240 / NCTC 8049).